The chain runs to 315 residues: ADP-L-glycero-D-manno-heptose-6-epimerase (315 aa).

NADP(+)-binding positions include Phe10 to Ile11, Asp31 to Asp32, Lys38, Lys53, Gln76 to Ser80, and Asn93. Residue Tyr140 is the Proton acceptor of the active site. Lys144 contributes to the NADP(+) binding site. Asn169 contributes to the substrate binding site. The NADP(+) site is built by Val170 and Lys178. Residue Lys178 is the Proton acceptor of the active site. Substrate contacts are provided by residues Ser180, His187, Phe201 to Cys204, Arg214, and Tyr278.

The protein belongs to the NAD(P)-dependent epimerase/dehydratase family. HldD subfamily. In terms of assembly, homopentamer. Requires NADP(+) as cofactor.

The catalysed reaction is ADP-D-glycero-beta-D-manno-heptose = ADP-L-glycero-beta-D-manno-heptose. It participates in nucleotide-sugar biosynthesis; ADP-L-glycero-beta-D-manno-heptose biosynthesis; ADP-L-glycero-beta-D-manno-heptose from D-glycero-beta-D-manno-heptose 7-phosphate: step 4/4. Catalyzes the interconversion between ADP-D-glycero-beta-D-manno-heptose and ADP-L-glycero-beta-D-manno-heptose via an epimerization at carbon 6 of the heptose. In Syntrophotalea carbinolica (strain DSM 2380 / NBRC 103641 / GraBd1) (Pelobacter carbinolicus), this protein is ADP-L-glycero-D-manno-heptose-6-epimerase.